Consider the following 372-residue polypeptide: uncharacterized protein (372 aa).

2 stretches are compositionally biased toward basic residues: residues 1–11 and 38–48; these read MNKILGLRRAK and RLRRGMQRLSR. Positions 1 to 127 are disordered; sequence MNKILGLRRA…NSGTRDTPCW (127 aa). Basic and acidic residues predominate over residues 50–61; sequence GYGDNRRSRGSE. Polar residues predominate over residues 93–104; that stretch reads GKTSPCGSSGTP.

This is an uncharacterized protein from Psittacid herpesvirus 1 (isolate Amazon parrot/-/97-0001/1997) (PsHV-1).